We begin with the raw amino-acid sequence, 712 residues long: Polyribonucleotide nucleotidyltransferase (712 aa).

2 residues coordinate Mg(2+): Asp-487 and Asp-493. Residues 554-613 (PRIHTMKISVEKIKDVIGKGGAVIRQLTEETGTTIEIEDDGTIKIAATDGDQAKEAIRRI) enclose the KH domain. Residues 623-691 (GVIYTGKVAR…RQGRVRLSMK (69 aa)) enclose the S1 motif domain.

It belongs to the polyribonucleotide nucleotidyltransferase family. Component of the RNA degradosome, which is a multiprotein complex involved in RNA processing and mRNA degradation. The cofactor is Mg(2+).

The protein resides in the cytoplasm. It catalyses the reaction RNA(n+1) + phosphate = RNA(n) + a ribonucleoside 5'-diphosphate. Functionally, involved in mRNA degradation. Catalyzes the phosphorolysis of single-stranded polyribonucleotides processively in the 3'- to 5'-direction. The protein is Polyribonucleotide nucleotidyltransferase of Vibrio cholerae serotype O1 (strain ATCC 39541 / Classical Ogawa 395 / O395).